Here is a 914-residue protein sequence, read N- to C-terminus: Effector protein hopAE1 (914 aa).

Polar residues predominate over residues M1 to S13. The tract at residues M1–T31 is disordered.

This sequence belongs to the HopW family.

Its subcellular location is the secreted. The protein is Effector protein hopAE1 (hopAE1) of Pseudomonas syringae pv. syringae (strain B728a).